The sequence spans 326 residues: Fructokinase (326 aa).

Residues 275–326 form a disordered region; that stretch reads EQALRNGPDPRRQSRRRHRLPRRRQSTLGARDWSLRLEQDSDPHPPDDTFSP. Basic residues predominate over residues 287-299; sequence QSRRRHRLPRRRQ. Basic and acidic residues predominate over residues 307-326; the sequence is WSLRLEQDSDPHPPDDTFSP.

This sequence belongs to the carbohydrate kinase PfkB family.

The catalysed reaction is D-fructose + ATP = D-fructose 6-phosphate + ADP + H(+). The polypeptide is Fructokinase (frk) (Rhizobium leguminosarum bv. trifolii).